The following is a 218-amino-acid chain: Albicidin resistance protein (218 aa).

It is found in the periplasm. Its function is as follows. Albicidin resistance protein binds to form a complex without antibiotic activity but without catalyzing any further chemical modifications to albicidin. The polypeptide is Albicidin resistance protein (Klebsiella oxytoca).